Reading from the N-terminus, the 407-residue chain is MTVRGAALAPDPASPTTTTASPSVSATPEGSPTAMEHPVFLMTTAAQAISGFFVWTALLITCHQIYMHLRCYSRPNEQRHIVRILFIVPIYAFDSWLSLLFFTNDQYYVYFGTVRDCYEAFVIYNFLSLCYEYLGGESAIMSEIRGKAIESSCMYGTCCLWGKTYSIGFLRFCKQATLQFCVVKPLMAVSTVILQAFGKYRDGDFDVTSGYLYVTIIYNISVSLALYALFLFYFATRELLSPYSPVLKFFMVKSVIFLSFWQGMLLAILEKCGAIPKINSARVSVGEGTVAAGYQDFIICVEMFFAALALRHAFTYKVYADKRLDAQGRCAPMKSISSSLKETMNPHDIVQDAIHNFSPAYQQYTQQSTLEPGPTWRGGTHSLSRSHSLSGARDNEKTLLLSSDDEF.

Residues 1-28 show a composition bias toward low complexity; it reads MTVRGAALAPDPASPTTTTASPSVSATP. Residues 1 to 31 are disordered; it reads MTVRGAALAPDPASPTTTTASPSVSATPEGS. A run of 7 helical transmembrane segments spans residues 40 to 60, 84 to 104, 121 to 141, 178 to 198, 214 to 234, 249 to 269, and 290 to 310; these read FLMTTAAQAISGFFVWTALLI, ILFIVPIYAFDSWLSLLFFTN, FVIYNFLSLCYEYLGGESAIM, LQFCVVKPLMAVSTVILQAFG, VTIIYNISVSLALYALFLFYF, FFMVKSVIFLSFWQGMLLAIL, and VAAGYQDFIICVEMFFAALAL. Positions 369–395 are disordered; sequence TLEPGPTWRGGTHSLSRSHSLSGARDN. S388, S402, and S403 each carry phosphoserine.

It belongs to the TMEM184 family.

The protein resides in the membrane. Its function is as follows. May activate the MAP kinase signaling pathway. The polypeptide is Transmembrane protein 184B (Tmem184b) (Mus musculus (Mouse)).